Reading from the N-terminus, the 335-residue chain is 4-hydroxythreonine-4-phosphate dehydrogenase (335 aa).

Substrate is bound by residues His-135 and Thr-136. The a divalent metal cation site is built by His-165, His-210, and His-265. Substrate contacts are provided by Lys-273, Asn-282, and Arg-291.

It belongs to the PdxA family. As to quaternary structure, homodimer. It depends on Zn(2+) as a cofactor. Mg(2+) is required as a cofactor. Co(2+) serves as cofactor.

Its subcellular location is the cytoplasm. The enzyme catalyses 4-(phosphooxy)-L-threonine + NAD(+) = 3-amino-2-oxopropyl phosphate + CO2 + NADH. It participates in cofactor biosynthesis; pyridoxine 5'-phosphate biosynthesis; pyridoxine 5'-phosphate from D-erythrose 4-phosphate: step 4/5. Functionally, catalyzes the NAD(P)-dependent oxidation of 4-(phosphooxy)-L-threonine (HTP) into 2-amino-3-oxo-4-(phosphooxy)butyric acid which spontaneously decarboxylates to form 3-amino-2-oxopropyl phosphate (AHAP). The polypeptide is 4-hydroxythreonine-4-phosphate dehydrogenase (Saccharophagus degradans (strain 2-40 / ATCC 43961 / DSM 17024)).